Consider the following 616-residue polypeptide: Chaperone protein DnaK (616 aa).

The residue at position 175 (Thr175) is a Phosphothreonine; by autocatalysis. Residues 579 to 616 (GGDPSQAGGFDPNAAGGAQQEPHDDNVVDADFKVDDDK) are disordered. Residues 599-616 (EPHDDNVVDADFKVDDDK) show a composition bias toward basic and acidic residues.

Belongs to the heat shock protein 70 family.

In terms of biological role, acts as a chaperone. The protein is Chaperone protein DnaK of Clostridium botulinum (strain Eklund 17B / Type B).